A 182-amino-acid chain; its full sequence is UPF0397 protein VS_II0189 (182 aa).

The next 5 helical transmembrane spans lie at 8-28 (VVVI…MFGV), 41-61 (AVLA…VGFI), 72-92 (WGVW…IGLF), 110-130 (FALF…SSAF), and 146-166 (QLSI…FLIL).

It belongs to the UPF0397 family.

Its subcellular location is the cell membrane. In Vibrio atlanticus (strain LGP32) (Vibrio splendidus (strain Mel32)), this protein is UPF0397 protein VS_II0189.